A 400-amino-acid polypeptide reads, in one-letter code: Flavo-diiron protein FprA2 (400 aa).

Positions 32–216 are zinc metallo-hydrolase; sequence GTSYNAYLIK…VVKGLDILDA (185 aa). Fe cation is bound by residues H79, E81, D83, H147, D166, and H226. One can recognise a Flavodoxin-like domain in the interval 257-397; the sequence is IPIFYCSAYG…KAFKFGEDFA (141 aa). FMN contacts are provided by residues 263 to 267 and 345 to 372; these read SAYGN and AFGS…KVFQ.

It in the N-terminal section; belongs to the zinc metallo-hydrolase group 3 family. In terms of assembly, homotetramer. FMN is required as a cofactor. It depends on Fe cation as a cofactor.

The enzyme catalyses 2 NADH + O2 + 2 H(+) = 2 NAD(+) + 2 H2O. Its function is as follows. Catalyzes the four-electron reduction of molecular oxygen to water. In fact, functions as the terminal component of an NADH oxidase (NADH:O(2) oxidoreductase) when using NADH:rubredoxin oxidoreductase (NROR) and rubredoxin (Rd) as electron transport intermediaries between NADH and FDP. Is thus able to reductively scavenge intracellular dioxygen and is part of an oxidative stress defense system in C.acetobutylicum, an obligate anaerobic bacterium. Can also serve as the terminal component of an NADH:nitric oxide oxidoreductase (NOR) with a catalytic efficiency comparable to that of its NADH oxidase activity, and therefore might have an in vivo role in scavenging nitric oxide. The polypeptide is Flavo-diiron protein FprA2 (fprA2) (Clostridium acetobutylicum (strain ATCC 824 / DSM 792 / JCM 1419 / IAM 19013 / LMG 5710 / NBRC 13948 / NRRL B-527 / VKM B-1787 / 2291 / W)).